Consider the following 193-residue polypeptide: uncharacterized protein (193 aa).

A signal peptide spans 1–22 (MAVQKNVIKGILAGTFALMLSG). C23 is lipidated: N-palmitoyl cysteine. The S-diacylglycerol cysteine moiety is linked to residue C23.

Its subcellular location is the cell membrane. This is an uncharacterized protein from Escherichia coli (strain K12).